Consider the following 141-residue polypeptide: Hemoglobin subunit alpha-D (141 aa).

The Globin domain occupies V1 to R141. The heme b site is built by Q58 and H87.

This sequence belongs to the globin family. In terms of assembly, heterotetramer of two alpha chains and two beta chains. In terms of tissue distribution, red blood cells.

Its function is as follows. Involved in oxygen transport from the lung to the various peripheral tissues. The sequence is that of Hemoglobin subunit alpha-D from Drymarchon melanurus erebennus (Texas indigo snake).